A 166-amino-acid polypeptide reads, in one-letter code: Stress response protein NhaX (166 aa).

It belongs to the universal stress protein A family.

The sequence is that of Stress response protein NhaX (nhaX) from Bacillus subtilis (strain 168).